Reading from the N-terminus, the 214-residue chain is Calcineurin B homologous protein 3 (214 aa).

Residue Gly2 is the site of N-myristoyl glycine attachment. In terms of domain architecture, EF-hand spans 110–145 (CRTDKLRFLFNMYDSDNDNKITLEEYRKVVEELLSG). Positions 123, 125, 127, 129, and 134 each coordinate Ca(2+).

Belongs to the calcineurin regulatory subunit family. CHP subfamily. In terms of assembly, monomer. Homodimer.

Its subcellular location is the nucleus. It localises to the cytoplasm. The protein resides in the membrane. It is found in the cell membrane. The protein localises to the cell projection. Its subcellular location is the lamellipodium. It localises to the ruffle membrane. Functions as an integral cofactor in cell pH regulation by controlling plasma membrane-type Na(+)/H(+) exchange activity. Promotes the induction of hematopoietic stem cell differentiation toward megakaryocytic lineage. Essential for the coupling of ERK cascade activation with the expression of ETS family genes in megakaryocytic differentiation. Also involved in granulocytic differentiation in a ERK-dependent manner. Inhibits the phosphatase activity of calcineurin. This is Calcineurin B homologous protein 3 from Xenopus laevis (African clawed frog).